The following is a 162-amino-acid chain: Corticoliberin-1 (162 aa).

The signal sequence occupies residues 1-24 (MKLNFLVTTVALLVAFPPPYECRA). Residues 25–119 (IDSSSNQPAT…ALDSEERERR (95 aa)) constitute a propeptide that is removed on maturation. Position 160 is a phenylalanine amide (Phe160).

The protein belongs to the sauvagine/corticotropin-releasing factor/urotensin I family.

It localises to the secreted. Its function is as follows. This hormone from hypothalamus regulates the release of corticotropin from pituitary gland. The sequence is that of Corticoliberin-1 (crf1) from Catostomus commersonii (White sucker).